The chain runs to 485 residues: Glutamyl-tRNA(Gln) amidotransferase subunit A (485 aa).

Catalysis depends on charge relay system residues K75 and S150. S174 serves as the catalytic Acyl-ester intermediate.

The protein belongs to the amidase family. GatA subfamily. In terms of assembly, heterotrimer of A, B and C subunits.

The enzyme catalyses L-glutamyl-tRNA(Gln) + L-glutamine + ATP + H2O = L-glutaminyl-tRNA(Gln) + L-glutamate + ADP + phosphate + H(+). In terms of biological role, allows the formation of correctly charged Gln-tRNA(Gln) through the transamidation of misacylated Glu-tRNA(Gln) in organisms which lack glutaminyl-tRNA synthetase. The reaction takes place in the presence of glutamine and ATP through an activated gamma-phospho-Glu-tRNA(Gln). The protein is Glutamyl-tRNA(Gln) amidotransferase subunit A of Picosynechococcus sp. (strain ATCC 27264 / PCC 7002 / PR-6) (Agmenellum quadruplicatum).